A 224-amino-acid chain; its full sequence is Mannose-specific lectin 3 (224 aa).

Bulb-type lectin domains are found at residues 2 to 111 (NNVL…PAAA) and 117 to 222 (RNVL…VWST). 2 disulfide bridges follow: C30–C52 and C145–C170.

In terms of assembly, heterotetramer of 2 domain 1 and 2 domain 2 chains arranged as a dimer of domain 1/domain 2 heterodimers.

Mannose-specific lectin. Has weak agglutinating activity towards trypsin-treated erythrocytes from rabbit but not from human. The protein is Mannose-specific lectin 3 of Crocus vernus (Dutch crocus).